A 475-amino-acid chain; its full sequence is MAAPRPPPGRLSGVMMPAPIQDLEALRALTALFKEQRNRDTAPRTIFQRVLDILKKSSHAVELACRDPSQVEHLASSLQLITECFRCLRNACIECSVNQNSIRNLGTIGVAVDLILLFRELRVEQDSLLTAFRCGLQFLGNIASRNEDSQSVVWMHAFPELFLSCLNHPDRKIVAYSSMILFTSLNSERMKELEENLNIAIDVVEAHQKQPESEWPFLIITDHFLKSPELVKAMYAKMSNQERVTLLDLMIAKIVGDEPLTKDDAPVFLSHAELIASTFVDQCKIVLKLTSEQHTDDEEALATIRLLDVLCEKTANTDLLGYLQVFPGLLERVIDLLRLIHVAGNDSTNIFSACASIKADGDVSSVAEGFKSHLIRLIGNLCYKNKDNQDKVNELDGIPLILDSCGLDDSNPFLTQWVVYAIRNLTEDNSQNQDLIAKMEEQGLADASLLKKMGFEVEKRGDKLILKSTSDTPQL.

R10 is modified (omega-N-methylarginine). Residues S12 and S77 each carry the phosphoserine modification. T82 is modified (phosphothreonine). S430 is modified (phosphoserine).

It belongs to the ataxin-10 family. In terms of assembly, homooligomer. Interacts with GNB2. Interacts with IQCB1. Interacts with OGT. Polyubiquitinated. In terms of processing, phosphorylation at Ser-12 by AURKB promotes the association of ATXN10 with PLK1. Phosphorylation at Ser-77 and Thr-82 by PLK1 may play a role in the regulation of cytokinesis and may stimulate the proteasome-mediated degradation of ATXN10.

Its subcellular location is the cytoplasm. The protein resides in the perinuclear region. It localises to the cytoskeleton. It is found in the cilium basal body. The protein localises to the microtubule organizing center. Its subcellular location is the centrosome. The protein resides in the centriole. It localises to the midbody. Functionally, may play a role in the regulation of cytokinesis. May play a role in signaling by stimulating protein glycosylation. Induces neuritogenesis by activating the Ras-MAP kinase pathway and is necessary for the survival of cerebellar neurons. Does not appear to play a major role in ciliogenesis. The protein is Ataxin-10 (ATXN10) of Bos taurus (Bovine).